We begin with the raw amino-acid sequence, 250 residues long: Entry-fusion complex associated protein OPG095 (250 aa).

Gly2 carries N-myristoyl glycine; by host lipidation. The targeting to MV membrane stretch occupies residues 2 to 12 (GAAASIQTTVN). The Virion surface segment spans residues 2–183 (GAAASIQTTV…IAPKQVAGTG (182 aa)). Cystine bridges form between Cys34-Cys57, Cys49-Cys136, and Cys116-Cys158. The chain crosses the membrane as a helical span at residues 184-204 (VQFYMIVIGVIILAALFMYYA). Topologically, residues 205-250 (KRMLFTSTNDKIKLILANKENVHWTTYMDTFFRTSPMVIATTDMQN) are intravirion.

It belongs to the orthopoxvirus OPG095 family. As to quaternary structure, component of the entry fusion complex (EFC) composed of OPG053/F9, OPG076/O3, OPG086/G3, OPG094/G9, OPG095/L1, OPG099/L5, OPG107/H2, OPG143/A16, OPG104/J5, OPG147/A21 and OPG155/A28. Except for OPG095/L1 and OPG053/F9, each of the EFC proteins is required for assembly or stability of the complex. Myristoylated. Post-translationally, disulfid bonds are oxidized in the cytoplasm by OPG088 protein. In terms of processing, unglycosylated because produced in viral factories instead of the classic ER -Golgi route.

The protein resides in the virion membrane. Component of the entry fusion complex (EFC), which consists of 11 proteins. During cell infection, this complex mediates entry of the virion core into the host cytoplasm by a two-step mechanism consisting of lipid mixing of the viral and cellular membranes and subsequent pore formation. In Bos taurus (Bovine), this protein is Entry-fusion complex associated protein OPG095 (OPG099).